The primary structure comprises 434 residues: Probable zinc metalloprotease PTRG_04772 (434 aa).

The N-linked (GlcNAc...) asparagine glycan is linked to Asn88. Zn(2+) contacts are provided by His111, Asp131, and Glu164. Asn179 carries an N-linked (GlcNAc...) asparagine glycan. Asp191 lines the Zn(2+) pocket. N-linked (GlcNAc...) asparagine glycosylation is found at Asn220, Asn299, Asn347, Asn353, Asn390, and Asn395. Residues 340–433 (SPTNVGINTT…LPFPFGCARN (94 aa)) enclose the Fibronectin type-III domain.

It belongs to the peptidase M28 family. M28B subfamily. The cofactor is Zn(2+).

It localises to the secreted. The polypeptide is Probable zinc metalloprotease PTRG_04772 (Pyrenophora tritici-repentis (strain Pt-1C-BFP) (Wheat tan spot fungus)).